The chain runs to 261 residues: Indole-3-glycerol phosphate synthase (261 aa).

It belongs to the TrpC family.

It carries out the reaction 1-(2-carboxyphenylamino)-1-deoxy-D-ribulose 5-phosphate + H(+) = (1S,2R)-1-C-(indol-3-yl)glycerol 3-phosphate + CO2 + H2O. Its pathway is amino-acid biosynthesis; L-tryptophan biosynthesis; L-tryptophan from chorismate: step 4/5. The protein is Indole-3-glycerol phosphate synthase of Burkholderia ambifaria (strain ATCC BAA-244 / DSM 16087 / CCUG 44356 / LMG 19182 / AMMD) (Burkholderia cepacia (strain AMMD)).